Reading from the N-terminus, the 330-residue chain is PTS system mannose-specific EIIAB component (330 aa).

In terms of domain architecture, PTS EIIA type-4 spans 2-130; it reads GIGIIIASHG…NIIKESKDGI (129 aa). The Tele-phosphohistidine intermediate; for EIIA activity role is filled by H10. Position 10 is a phosphohistidine; by HPr (H10). A hinge region spans residues 143-161; the sequence is TAATEKVVNALQGAIPAGT. The PTS EIIB type-4 domain occupies 166 to 330; sequence GKLKINLARV…FELIQKANIK (165 aa). H181 acts as the Pros-phosphohistidine intermediate; for EIIB activity in catalysis. H181 bears the Phosphohistidine; by EIIA mark.

In terms of assembly, homodimer.

The protein resides in the cytoplasm. Its subcellular location is the cell membrane. The catalysed reaction is D-mannose(out) + N(pros)-phospho-L-histidyl-[protein] = D-mannose 6-phosphate(in) + L-histidyl-[protein]. The phosphoenolpyruvate-dependent sugar phosphotransferase system (sugar PTS), a major carbohydrate active transport system, catalyzes the phosphorylation of incoming sugar substrates concomitantly with their translocation across the cell membrane. The enzyme II ManXYZ PTS system is involved in mannose transport. The chain is PTS system mannose-specific EIIAB component from Streptococcus pyogenes serotype M6 (strain ATCC BAA-946 / MGAS10394).